The primary structure comprises 161 residues: Large ribosomal subunit protein uL15 (161 aa).

A compositionally biased stretch (basic and acidic residues) spans 1 to 10 (MKLNELRDNP). The tract at residues 1 to 42 (MKLNELRDNPGARPKSKRLGRGIGSGKGKTSGKGVKGQKARE) is disordered. The span at 21–35 (RGIGSGKGKTSGKGV) shows a compositional bias: gly residues.

Belongs to the universal ribosomal protein uL15 family. Part of the 50S ribosomal subunit.

In terms of biological role, binds to the 23S rRNA. The polypeptide is Large ribosomal subunit protein uL15 (Acidiphilium cryptum (strain JF-5)).